Reading from the N-terminus, the 413-residue chain is Protein arginine N-methyltransferase 2 (413 aa).

Disordered regions lie at residues D65–V85 and E148–Q178. The span at E148–G173 shows a compositional bias: acidic residues. The 222-residue stretch at T192 to D413 folds into the RMT2 domain. Residues Y201, M230, H250–V255, E271–H273, W298–Q299, and D318 each bind S-adenosyl-L-methionine.

It belongs to the class I-like SAM-binding methyltransferase superfamily. RMT2 methyltransferase family. In terms of assembly, monomer.

Its subcellular location is the cytoplasm. The protein resides in the nucleus. In terms of biological role, S-adenosyl-L-methionine-dependent protein-arginine N-methyltransferase that methylates the delta-nitrogen atom of arginine residues to form N5-methylarginine (type IV) in target proteins. Monomethylates ribosomal protein L12. The polypeptide is Protein arginine N-methyltransferase 2 (Aspergillus oryzae (strain ATCC 42149 / RIB 40) (Yellow koji mold)).